A 98-amino-acid polypeptide reads, in one-letter code: Integration host factor subunit beta (98 aa).

Belongs to the bacterial histone-like protein family. In terms of assembly, heterodimer of an alpha and a beta chain.

Functionally, this protein is one of the two subunits of integration host factor, a specific DNA-binding protein that functions in genetic recombination as well as in transcriptional and translational control. This chain is Integration host factor subunit beta, found in Pseudomonas entomophila (strain L48).